We begin with the raw amino-acid sequence, 154 residues long: Actin-related protein 2/3 complex subunit 5 (154 aa).

Phosphothreonine is present on T142.

This sequence belongs to the ARPC5 family. Component of the Arp2/3 complex composed of ARP2, ARP3, ARC40/p41-ARC, ARC35/p34-ARC, ARC18/p21-ARC, ARC19/p20-ARC and ARC16/p16-ARC.

Its subcellular location is the cytoplasm. The protein resides in the cytoskeleton. The protein localises to the actin patch. In terms of biological role, functions as a component of the Arp2/3 complex which is involved in regulation of actin polymerization and together with an activating nucleation-promoting factor (NPF) mediates the formation of branched actin networks. This chain is Actin-related protein 2/3 complex subunit 5 (ARC15), found in Saccharomyces cerevisiae (strain ATCC 204508 / S288c) (Baker's yeast).